The primary structure comprises 507 residues: MAVVISSNGNSKSFDAKMTVYVFICVIIAAVGGLIFGYDIGISGGVTAMDDFLKEFFPSVYERKKHAHENNYCKYDNQFLQLFTSSLYLAALVASFFASATCSKLGRRPTMQLASIFFLIGVGLAAGAVNIYMLIIGRILLGFGVGFGNQAVPLFLSEIAPARLRGGLNIVFQLMVTIGILIANIVNYFTSSIHPYGWRIALGGAGIPALILLFGSLLICETPTSLIERNKTKEGKETLKKIRGVEDVDEEYESIVHACDIARQVKDPYTKLMKPASRPPFVIGMLLQFFQQFTGINAIMFYAPVLFQTVGFGNDAALLSAVVTGTINVLSTFVGIFLVDKTGRRFLLLQSSVHMLICQLVIGIILAKDLDVTGTLARPQALVVVIFVCVYVMGFAWSWGPLGWLIPSETFPLETRTEGFALAVSCNMFFTFVIAQAFLSMLCAMKSGIFFFFSGWIVVMGLFALFFVPETKGVSIDDMRDSVWKLHWYWKRFMLEEDEHDVEKRTD.

The Cytoplasmic portion of the chain corresponds to 1 to 21 (MAVVISSNGNSKSFDAKMTVY). Helical transmembrane passes span 22 to 42 (VFIC…DIGI), 79 to 99 (FLQL…FFAS), 116 to 136 (IFFL…MLII), 139 to 159 (ILLG…LSEI), 166 to 186 (GGLN…ANIV), 200 to 220 (IALG…LLIC), 281 to 301 (FVIG…AIMF), 319 to 339 (LSAV…IFLV), 346 to 366 (FLLL…GIIL), 382 to 402 (LVVV…WGPL), 419 to 439 (GFAL…QAFL), and 448 to 468 (GIFF…LFFV). The Cytoplasmic portion of the chain corresponds to 469 to 507 (PETKGVSIDDMRDSVWKLHWYWKRFMLEEDEHDVEKRTD).

This sequence belongs to the major facilitator superfamily. Sugar transporter (TC 2.A.1.1) family.

Its subcellular location is the membrane. In terms of biological role, mediates an active uptake of hexoses, probably by sugar/hydrogen symport. The protein is Sugar transport protein 8 (STP8) of Arabidopsis thaliana (Mouse-ear cress).